Consider the following 137-residue polypeptide: Large ribosomal subunit protein uL16 (137 aa).

The protein belongs to the universal ribosomal protein uL16 family. As to quaternary structure, part of the 50S ribosomal subunit.

In terms of biological role, binds 23S rRNA and is also seen to make contacts with the A and possibly P site tRNAs. The protein is Large ribosomal subunit protein uL16 of Ruegeria sp. (strain TM1040) (Silicibacter sp.).